The following is a 962-amino-acid chain: Activity-dependent neuroprotective protein 2a (962 aa).

A C2H2-type 1 zinc finger spans residues 75–98; sequence LCCSLCWYSSRSVPTFRSHIHRCH. A C2H2-type 2; degenerate zinc finger spans residues 108–130; sequence LMCPYCPFVSSPKVTEQHIQFFH. A C2H2-type 3; degenerate zinc finger spans residues 165 to 188; that stretch reads YTCATCGYHDSLLYVMKKHVLVNH. A C2H2-type 4 zinc finger spans residues 219–244; the sequence is YHCKLCKLPAETIEHLLYHILSSEKH. A C2H2-type 5; degenerate zinc finger spans residues 527–547; it reads VKCLRCKILLTEQGIFQHLLH. 2 consecutive C2H2-type zinc fingers follow at residues 549–572 and 650–673; these read LKCLFCPQMFYSFKQIMEHSKKEH and NACPFCQVKLQNPEDYELHLQTKH. Residues 688 to 712 form a C2H2-type 8; degenerate zinc finger; that stretch reads YKCIYCFGVYTEKSTPKTISIHVQR. A disordered region spans residues 753 to 781; sequence QGAPEFPKPKKEAVTPRNRRRNTKASKTG. A DNA-binding region (homeobox) is located at residues 795–854; the sequence is PMGMERTSFEDRKDFLSQYFHRKPYVTKTEIELLASRLWINKADVKAHFNSKLTKCLKAI.

It is found in the nucleus. In terms of biological role, may be involved in transcriptional regulation. Required for progression through late erythroid differentiation. May be involved in vasculogenesis. In Danio rerio (Zebrafish), this protein is Activity-dependent neuroprotective protein 2a.